Reading from the N-terminus, the 229-residue chain is Enolase-phosphatase E1 (229 aa).

Over residues 208 to 218 (DTQSTHRQVSS) the composition is skewed to polar residues. The disordered stretch occupies residues 208-229 (DTQSTHRQVSSFDDIHPEQIPT). Residues 220–229 (DDIHPEQIPT) are compositionally biased toward basic and acidic residues.

Belongs to the HAD-like hydrolase superfamily. MasA/MtnC family. Monomer. Mg(2+) serves as cofactor.

The catalysed reaction is 5-methylsulfanyl-2,3-dioxopentyl phosphate + H2O = 1,2-dihydroxy-5-(methylsulfanyl)pent-1-en-3-one + phosphate. It functions in the pathway amino-acid biosynthesis; L-methionine biosynthesis via salvage pathway; L-methionine from S-methyl-5-thio-alpha-D-ribose 1-phosphate: step 3/6. Its pathway is amino-acid biosynthesis; L-methionine biosynthesis via salvage pathway; L-methionine from S-methyl-5-thio-alpha-D-ribose 1-phosphate: step 4/6. Bifunctional enzyme that catalyzes the enolization of 2,3-diketo-5-methylthiopentyl-1-phosphate (DK-MTP-1-P) into the intermediate 2-hydroxy-3-keto-5-methylthiopentenyl-1-phosphate (HK-MTPenyl-1-P), which is then dephosphorylated to form the acireductone 1,2-dihydroxy-3-keto-5-methylthiopentene (DHK-MTPene). This chain is Enolase-phosphatase E1, found in Cronobacter sakazakii (strain ATCC BAA-894) (Enterobacter sakazakii).